The primary structure comprises 154 residues: Sperm microtubule associated protein 1 (154 aa).

This Homo sapiens (Human) protein is Sperm microtubule associated protein 1.